The chain runs to 750 residues: Alpha-galactosidase C (750 aa).

The first 26 residues, 1 to 26 (MFRSTATVAAATAMGLLTATGHGSLA), serve as a signal peptide directing secretion. 8 N-linked (GlcNAc...) asparagine glycosylation sites follow: N58, N162, N186, N194, N366, N428, N432, and N453. D511 serves as the catalytic Nucleophile. The Proton donor role is filled by D573.

The protein belongs to the glycosyl hydrolase 36 family. Homotetramer. Requires Mg(2+) as cofactor. NAD(+) is required as a cofactor.

It localises to the secreted. The enzyme catalyses Hydrolysis of terminal, non-reducing alpha-D-galactose residues in alpha-D-galactosides, including galactose oligosaccharides, galactomannans and galactolipids.. Hydrolyzes a variety of simple alpha-D-galactoside as well as more complex molecules such as oligosaccharides and polysaccharides. Active on paranitrophenyl-alpha-galactoside, raffinose, locust bean gum and gum guar. The chain is Alpha-galactosidase C (aglC) from Emericella nidulans (strain FGSC A4 / ATCC 38163 / CBS 112.46 / NRRL 194 / M139) (Aspergillus nidulans).